The sequence spans 485 residues: Putative ATP-dependent RNA helicase ste13 (485 aa).

The interval 16 to 38 is disordered; it reads DRESFKGQMKAQPVDMRPKTEDV. Positions 44–72 match the Q motif motif; the sequence is TEFEDYYLKRELLMGIFEAGFERPSPIQE. The Helicase ATP-binding domain occupies 75–245; that stretch reads IPIALSGRDI…DKHLNKPYEI (171 aa). ATP is bound at residue 88–95; that stretch reads AKNGTGKT. A DEAD box motif is present at residues 193–196; sequence DEAD. Positions 255 to 415 constitute a Helicase C-terminal domain; that stretch reads GVTQYYAFVD…PIPPSIDPSL (161 aa). The interval 437 to 485 is disordered; it reads LAAQQAKGQEGYHNRPNNNRGGHPRGGGNRGGYRQSNRQPRYRGQQKAD.

This sequence belongs to the DEAD box helicase family. DDX6/DHH1 subfamily.

The protein localises to the cytoplasm. It is found in the P-body. The catalysed reaction is ATP + H2O = ADP + phosphate + H(+). Functionally, ATP-dependent RNA helicase involved in mRNA turnover, and more specifically in mRNA decapping. Is involved in G1/S DNA-damage checkpoint recovery, probably through the regulation of the translational status of a subset of mRNAs. May also have a role in translation and mRNA nuclear export. This is Putative ATP-dependent RNA helicase ste13 (ste13) from Schizosaccharomyces pombe (strain 972 / ATCC 24843) (Fission yeast).